Here is a 249-residue protein sequence, read N- to C-terminus: Coproheme decarboxylase (249 aa).

Fe-coproporphyrin III contacts are provided by residues Arg131, 145–149 (YPMDK), His172, Gln185, and Ser223. Residue Tyr145 is part of the active site.

Belongs to the ChdC family. Type 1 subfamily. The cofactor is Fe-coproporphyrin III.

It carries out the reaction Fe-coproporphyrin III + 2 H2O2 + 2 H(+) = heme b + 2 CO2 + 4 H2O. The enzyme catalyses Fe-coproporphyrin III + H2O2 + H(+) = harderoheme III + CO2 + 2 H2O. It catalyses the reaction harderoheme III + H2O2 + H(+) = heme b + CO2 + 2 H2O. Its pathway is porphyrin-containing compound metabolism; protoheme biosynthesis. Involved in coproporphyrin-dependent heme b biosynthesis. Catalyzes the decarboxylation of Fe-coproporphyrin III (coproheme) to heme b (protoheme IX), the last step of the pathway. The reaction occurs in a stepwise manner with a three-propionate intermediate. The polypeptide is Coproheme decarboxylase (Shouchella clausii (strain KSM-K16) (Alkalihalobacillus clausii)).